The chain runs to 98 residues: MYRETFVFCVLLAVVSANVEMRDLEEKPEKYKGVNCCYVSAIQECIPVGETRPFKHECKGWTCNKDNLLEVSCGKVLVEHYVEDKTAPYPHCCPVAKA.

A signal peptide spans 1–17 (MYRETFVFCVLLAVVSA).

This sequence belongs to the caterpillar 1 family. Contains 4 disulfide bonds. As to expression, expressed by the venom apparatus.

It is found in the secreted. Its function is as follows. Probable toxin. The protein is U-megalopygitoxin(1)-Mo1 of Megalopyge opercularis (Southern flannel moth).